The chain runs to 649 residues: MMNQSQRMAPVGSDKELSDLLDFSMMFPLPVANGKGRPASLAGTQFAGSGLEDRPSSESWGNSEQNSSSFDPSRAYSEGAHFSDSHSSLPPSTFLGAGLGGKGSERNAYATFGRDTSVGTLSQAGFLPGELGLSSPGPLSPSGVKSSSQYYTSFPSNPRRRAADGGLDTQPKKVRKVPPGLPSSVYPSSSGDNYSRDATAYPSAKTPSSAYPSPFYVADGSLHPSAELWSPPGQVGFGPMLGDGSAPLPLAPGSSSVSSGAFGGLQQQDRMGYQLHGSEVNGTLPAVSSFSAAPGTYSGTSGHTPPVSGADSLLGTRGTTASSSGDALGKALASIYSPDHSSNNFSPSPSTPVGSPQGLPGTSQWPRAGAPSALSPNYDAGLHGLSKMEDRLDEAIHVLRSHAVGTASELHGLLPGHSTLTTSFAGPMSLGGRHAGLVSGSHPEDGLTSGASLLHNHASLPSQPSSLPDLSQRPPDSFSGLGRAGVTAGASEIKREEKEDEEVTSVADAEEDKKDLKVPRTRTSPDEDEDDLLPPEQKAEREKERRVANNARERLRVRDINEAFKELGRMCQLHLSTEKPQTKLLILHQAVAVILSLEQQVRERNLNPKAACLKRREEEKVSGVVGDPQLALSAAHPGLGEAHNPAGHL.

Disordered stretches follow at residues 37 to 107, 132 to 207, 296 to 325, and 339 to 376; these read RPAS…SERN, GLSS…AKTP, TYSGTSGHTPPVSGADSLLGTRGTTASSSG, and DHSSNNFSPSPSTPVGSPQGLPGTSQWPRAGAPSALSP. A compositionally biased stretch (polar residues) spans 57-71; that stretch reads SESWGNSEQNSSSFD. A compositionally biased stretch (low complexity) spans 132-148; sequence GLSSPGPLSPSGVKSSS. Residues S135 and S140 each carry the phosphoserine modification. Residues 171 to 177 carry the Nuclear localization signal motif; it reads PKKVRKV. A compositionally biased stretch (low complexity) spans 339-352; the sequence is DHSSNNFSPSPSTP. The residue at position 351 (T351) is a Phosphothreonine. S355 is subject to Phosphoserine. Omega-N-methylarginine is present on R367. S375 is modified (phosphoserine). The segment at 385–420 is leucine-zipper; the sequence is LSKMEDRLDEAIHVLRSHAVGTASELHGLLPGHSTL. Residues 435–547 are disordered; sequence AGLVSGSHPE…KAEREKERRV (113 aa). Over residues 459–477 the composition is skewed to low complexity; that stretch reads SLPSQPSSLPDLSQRPPDS. K494 participates in a covalent cross-link: Glycyl lysine isopeptide (Lys-Gly) (interchain with G-Cter in SUMO2). Residue S524 is modified to Phosphoserine. D526 is subject to Phosphothreonine. The span at 537 to 547 shows a compositional bias: basic and acidic residues; sequence QKAEREKERRV. Positions 544-597 constitute a bHLH domain; sequence ERRVANNARERLRVRDINEAFKELGRMCQLHLSTEKPQTKLLILHQAVAVILSL. A Glycyl lysine isopeptide (Lys-Gly) (interchain with G-Cter in SUMO2) cross-link involves residue K620.

In terms of assembly, homodimer. Heterodimer; efficient DNA binding requires dimerization with another bHLH protein. Forms a heterodimer with TWIST1 and TWIST2. Forms a heterodimer with NEUROD1; the heterodimer is inhibited in presence of ID2, but not NR0B2, to E-box element. Forms a heterodimer with TCF15; the heterodimer binds E-box element. Forms a heterodimer with MYOG; heterodimerization enhances MYOG DNA-binding and transcriptional activities. Forms a heterodimer with ATOH8; repress transcription of TCF3 and TCF3-NEUROG3 dimer-induced transactivation of E box-dependent promoters. Component of a nuclear TAL-1 complex composed at least of CBFA2T3, LDB1, TAL1 and TCF3. Interacts with NEUROD2. Interacts with EP300. Interacts with PTF1A, TGFB1I1. Interacts with UBE2I. Interacts with BHLHA9. Interacts with ASB2; the interaction is mediated by SKP2 and targets TCF3 for Notch-induced proteasomal degradation. Interacts with transcription factor ASCL5/AmeloD. Interacts with RALGAPA1. Interacts with FIGLA. As to quaternary structure, forms a heterodimer with ATOH7; required for ATOH7 DNA-binding. Post-translationally, phosphorylated following NGF stimulation. In terms of processing, undergoes Notch-induced ubiquitination and subsequent proteasomal degradation which is mediated by ASB1 or ASB2, the substrate-recognition components of probable ECS E3 ubiquitin-protein ligase complexes.

The protein resides in the nucleus. Its function is as follows. Transcriptional regulator involved in the initiation of neuronal differentiation and mesenchymal to epithelial transition. Heterodimers between TCF3 and tissue-specific basic helix-loop-helix (bHLH) proteins play major roles in determining tissue-specific cell fate during embryogenesis, like muscle or early B-cell differentiation. Together with TCF15, required for the mesenchymal to epithelial transition. Dimers bind DNA on E-box motifs: 5'-CANNTG-3'. Binds to the kappa-E2 site in the kappa immunoglobulin gene enhancer. Binds to the consensus sequence CAC/GCTGT/C present, in the chymotrypsin, insulin, AP-4, and several other gene enhancer motifs. In terms of biological role, facilitates ATOH7 binding to DNA at the consensus sequence 5'-CAGGTG-3', and positively regulates transcriptional activity. The chain is Transcription factor E2-alpha (Tcf3) from Rattus norvegicus (Rat).